The following is a 510-amino-acid chain: Anaerobic nitric oxide reductase transcription regulator NorR (510 aa).

One can recognise a Sigma-54 factor interaction domain in the interval 188–417; sequence IIGNSQGMRT…LEHVIKRAAV (230 aa). Residues 216-223 and 279-288 each bind ATP; these read GETGVGKE and ADGGTLFLDE. The segment at residues 486-505 is a DNA-binding region (H-T-H motif); the sequence is WAATARQLELDSGNLHRLAK.

Its pathway is nitrogen metabolism; nitric oxide reduction. Functionally, required for the expression of anaerobic nitric oxide (NO) reductase, acts as a transcriptional activator for at least the norVW operon. Activation also requires sigma-54. The polypeptide is Anaerobic nitric oxide reductase transcription regulator NorR (Vibrio vulnificus (strain YJ016)).